We begin with the raw amino-acid sequence, 209 residues long: Ubiquitin-conjugating enzyme E2 S (209 aa).

The region spanning 14–160 is the UBC core domain; that stretch reads QTIRQVMREL…ARMMTEIHAQ (147 aa). The active-site Glycyl thioester intermediate is Cys98. Residues 165–209 are disordered; sequence GVGATGDAKDDGGPSTKKHAGLDKKLQDKKKEKLLKEKKRMLKRL. Residues 184–199 show a composition bias toward basic and acidic residues; that stretch reads AGLDKKLQDKKKEKLL. Residues 200 to 209 are compositionally biased toward basic residues; it reads KEKKRMLKRL.

It belongs to the ubiquitin-conjugating enzyme family.

It carries out the reaction S-ubiquitinyl-[E1 ubiquitin-activating enzyme]-L-cysteine + [E2 ubiquitin-conjugating enzyme]-L-cysteine = [E1 ubiquitin-activating enzyme]-L-cysteine + S-ubiquitinyl-[E2 ubiquitin-conjugating enzyme]-L-cysteine.. It functions in the pathway protein modification; protein ubiquitination. In terms of biological role, catalyzes the covalent attachment of ubiquitin to other proteins. Acts as an essential factor of the anaphase promoting complex/cyclosome (APC/C), a cell cycle-regulated ubiquitin ligase that controls progression through mitosis. Acts by specifically elongating polyubiquitin chains initiated by the E2 enzyme vih/UbcH10 on APC/C substrates, enhancing the degradation of APC/C substrates by the proteasome and promoting mitotic exit. The sequence is that of Ubiquitin-conjugating enzyme E2 S from Drosophila simulans (Fruit fly).